The following is a 30-amino-acid chain: Varv peptide H (30 aa).

Positions 1 to 30 (GLPVCGETCFGGTCNTPGCSCETWPVCSRN) form a cross-link, cyclopeptide (Gly-Asn). Disulfide bonds link C5/C19, C9/C21, and C14/C27.

This is a cyclic peptide.

Its function is as follows. Probably participates in a plant defense mechanism. In Viola arvensis (European field pansy), this protein is Varv peptide H.